Consider the following 309-residue polypeptide: Taste receptor type 2 member 31 (309 aa).

Topologically, residues 1 to 2 (MT) are extracellular. A helical transmembrane segment spans residues 3–23 (TFLPIIFSSLVVVIFVIGNFA). Residues 24–55 (NGFIALVNSIEWFKXQKISFADQILTALAVSR) lie on the Cytoplasmic side of the membrane. Residues 56-76 (VGLLWVLLLNWYSTVLNPAFY) traverse the membrane as a helical segment. Over 77 to 100 (SVEVRTTAYNVWAVTGHFSNWLAT) the chain is Extracellular. Residues 101–121 (SLSIFYLLKIANFSNFIFLHL) traverse the membrane as a helical segment. Residues 122–126 (KRRVK) are Cytoplasmic-facing. A helical membrane pass occupies residues 127 to 147 (SVILVMLLGPLLFLACQLFMI). Topologically, residues 148-181 (NMKEIVRTKEYEGNMTWKIKLRSAVYLSDATVTT) are extracellular. An N-linked (GlcNAc...) asparagine glycan is attached at Asn-161. A helical membrane pass occupies residues 182–202 (LGNLVPFTLTLLCFLLLICSL). Topologically, residues 203–229 (CKHLKKMQLHGKGSQDPSTKVHIKVLQ) are cytoplasmic. The helical transmembrane segment at 230–250 (TVISFLLLCAIYFLSIMISVW) threads the bilayer. Residues 251-259 (SFGSLKNKP) lie on the Extracellular side of the membrane. Residues 260-280 (VFMFCKAIRFSYPSIHPFILI) traverse the membrane as a helical segment. Over 281–309 (WGNKKLKQTFLSVLRQVRYWVKGEKPSSP) the chain is Cytoplasmic.

This sequence belongs to the G-protein coupled receptor T2R family.

The protein localises to the membrane. Receptor that may play a role in the perception of bitterness and is gustducin-linked. May play a role in sensing the chemical composition of the gastrointestinal content. The activity of this receptor may stimulate alpha gustducin, mediate PLC-beta-2 activation and lead to the gating of TRPM5. This Pan paniscus (Pygmy chimpanzee) protein is Taste receptor type 2 member 31 (TAS2R31).